A 228-amino-acid polypeptide reads, in one-letter code: E3 ubiquitin-protein ligase RNF114 (228 aa).

An RING-type zinc finger spans residues 29–68 (CPVCLEVYEKPVQVPCGHVFCSACLQECLKPKKPVCGVCR). The Zn(2+) site is built by C91 and C94. Residues 91-110 (CHGCRKNFFLSKIRAHVATC) form a C2HC RNF-type zinc finger. K102 is modified (N6-acetyllysine). H106 and C110 together coordinate Zn(2+). The residue at position 112 (K112) is an N6-acetyllysine.

In terms of assembly, interacts with XAF1, the interaction increases XAF1 stability and proapoptotic effects, and may regulate IFN signaling. Autoubiquitinated. Polyubiquitinated in the presence of E2 enzymes UBE2D1, UBE2D2 and UBE2D3, but only monoubiquitinated in the presence of UBE2E1.

It localises to the cytoplasm. The protein localises to the nucleus. The catalysed reaction is S-ubiquitinyl-[E2 ubiquitin-conjugating enzyme]-L-cysteine + [acceptor protein]-L-lysine = [E2 ubiquitin-conjugating enzyme]-L-cysteine + N(6)-ubiquitinyl-[acceptor protein]-L-lysine.. The protein operates within protein modification; protein ubiquitination. Functionally, E3 ubiquitin-protein ligase that promotes the ubiquitination of various substrates. In turn, participates in the regulation of many biological processes including cell cycle, apoptosis, osteoclastogenesis as well as innate or adaptive immunity. Acts as negative regulator of NF-kappa-B-dependent transcription by promoting the ubiquitination and stabilization of the NF-kappa-B inhibitor TNFAIP3. May promote the ubiquitination of TRAF6 as well. Also acts as a negative regulator of T-cell activation. Inhibits cellular dsRNA responses and interferon production by targeting MAVS component for proteasomal degradation. Ubiquitinates the CDK inhibitor CDKN1A leading to its degradationand probably also CDKN1B and CDKN1C. This activity stimulates cell cycle G1-to-S phase transition and suppresses cellular senescence. May play a role in spermatogenesis. Inhibits classical swine fever virus replication by mediating 'K27'-linked ubiquitination of viral NS4B and inducing its degradation via the proteasome. This Sus scrofa (Pig) protein is E3 ubiquitin-protein ligase RNF114 (RNF114).